Reading from the N-terminus, the 211-residue chain is Dof zinc finger protein 5 (211 aa).

The interval 37–101 (FVVAREKVEP…QRRLQDSAEA (65 aa)) is disordered. Residues 68-80 (IKREAADRDEEQR) show a composition bias toward basic and acidic residues. The segment at 109–163 (LPCPRCRSRDTKFCYFNNYNVNQPRHFCKACHRYWTAGGALRNVPVGAGRRKNRP) adopts a Dof-type zinc-finger fold. Zn(2+) contacts are provided by cysteine 111, cysteine 114, cysteine 136, and cysteine 139. Positions 191 to 211 (SPTSPSPVYTDRWPVTPDRPF) are disordered.

It localises to the nucleus. In terms of biological role, transcription factor that may transactivate seed storage protein genes in developing seeds. In Oryza sativa subsp. japonica (Rice), this protein is Dof zinc finger protein 5.